Reading from the N-terminus, the 234-residue chain is Fibrillarin-like rRNA/tRNA 2'-O-methyltransferase (234 aa).

S-adenosyl-L-methionine is bound by residues 90 to 91 (TT), 109 to 110 (EF), 134 to 135 (DA), and 154 to 157 (DIAQ).

The protein belongs to the methyltransferase superfamily. Fibrillarin family. In terms of assembly, interacts with nop5. Component of box C/D small ribonucleoprotein (sRNP) particles that contain rpl7ae, FlpA and nop5, plus a guide RNA.

Its function is as follows. Involved in pre-rRNA and tRNA processing. Utilizes the methyl donor S-adenosyl-L-methionine to catalyze the site-specific 2'-hydroxyl methylation of ribose moieties in rRNA and tRNA. Site specificity is provided by a guide RNA that base pairs with the substrate. Methylation occurs at a characteristic distance from the sequence involved in base pairing with the guide RNA. This is Fibrillarin-like rRNA/tRNA 2'-O-methyltransferase from Staphylothermus marinus (strain ATCC 43588 / DSM 3639 / JCM 9404 / F1).